The sequence spans 197 residues: Ribonuclease HII (197 aa).

Positions 9-197 (ELIAGVDEVG…APVKKALEQF (189 aa)) constitute an RNase H type-2 domain. Residues aspartate 15, glutamate 16, and aspartate 107 each coordinate a divalent metal cation.

Belongs to the RNase HII family. The cofactor is Mn(2+). Mg(2+) serves as cofactor.

The protein localises to the cytoplasm. The catalysed reaction is Endonucleolytic cleavage to 5'-phosphomonoester.. In terms of biological role, endonuclease that specifically degrades the RNA of RNA-DNA hybrids. The chain is Ribonuclease HII from Haemophilus influenzae (strain 86-028NP).